The following is a 421-amino-acid chain: NAD-specific glutamate dehydrogenase (421 aa).

Positions 70 and 94 each coordinate substrate. The active-site Proton donor is Lys106. NAD(+)-binding residues include Thr191 and Asn222. Ser355 contributes to the substrate binding site.

Belongs to the Glu/Leu/Phe/Val dehydrogenases family. In terms of assembly, homohexamer.

The enzyme catalyses L-glutamate + NAD(+) + H2O = 2-oxoglutarate + NH4(+) + NADH + H(+). It participates in amino-acid degradation; L-glutamate degradation via hydroxyglutarate pathway; crotonoyl-CoA from L-glutamate: step 1/5. This is NAD-specific glutamate dehydrogenase from Peptoniphilus asaccharolyticus (Peptostreptococcus asaccharolyticus).